The primary structure comprises 355 residues: MHC class I-like protein MILL2 (355 aa).

Residues 1–29 form the signal peptide; it reads MKASSGKPREFRPAVLLLILGLLLRDSRG. The alpha-1 stretch occupies residues 46 to 137; that stretch reads RLTRTHTLRY…VINQKSQEEG (92 aa). 3 cysteine pairs are disulfide-bonded: Cys-96–Cys-107, Cys-147–Cys-210, and Cys-249–Cys-306. 2 N-linked (GlcNAc...) asparagine glycosylation sites follow: Asn-104 and Asn-152. The interval 138–229 is alpha-2; it reads LHTLQATLGC…SLRNGLQDTG (92 aa). The interval 230-323 is alpha-3; that stretch reads PPMVTVTCRN…SIMQTAVSGH (94 aa). The Ig-like C1-type domain maps to 231–321; it reads PMVTVTCRNY…NHSIMQTAVS (91 aa). N-linked (GlcNAc...) asparagine glycosylation is present at Asn-312. The segment at 324–329 is connecting peptide; sequence AAEDSQ. Residue Asp-330 is the site of GPI-anchor amidated aspartate attachment. The propeptide at 331 to 355 is removed in mature form; sequence VASSATASAGSALPVVLAVALARAN.

This sequence belongs to the MHC class I family. Heterodimer with B2M (beta-2-microglobulin). N-glycosylated. Ubiquitously expressed in neonatal and adult tissues.

It is found in the cell membrane. In terms of biological role, binds to heparan sulfate proteoglycans on the surface of fibroblast (NIH-3T3) cells. The protein is MHC class I-like protein MILL2 of Mus musculus (Mouse).